Reading from the N-terminus, the 689-residue chain is Elongation factor G (689 aa).

The 275-residue stretch at 8–282 (DKVRNIGIMA…AIVRYLPSPL (275 aa)) folds into the tr-type G domain. GTP-binding positions include 17–24 (AHIDAGKT), 81–85 (DTPGH), and 135–138 (NKMD).

It belongs to the TRAFAC class translation factor GTPase superfamily. Classic translation factor GTPase family. EF-G/EF-2 subfamily.

It localises to the cytoplasm. Its function is as follows. Catalyzes the GTP-dependent ribosomal translocation step during translation elongation. During this step, the ribosome changes from the pre-translocational (PRE) to the post-translocational (POST) state as the newly formed A-site-bound peptidyl-tRNA and P-site-bound deacylated tRNA move to the P and E sites, respectively. Catalyzes the coordinated movement of the two tRNA molecules, the mRNA and conformational changes in the ribosome. In Thermoanaerobacter pseudethanolicus (strain ATCC 33223 / 39E) (Clostridium thermohydrosulfuricum), this protein is Elongation factor G.